A 465-amino-acid polypeptide reads, in one-letter code: GTPase Der (465 aa).

EngA-type G domains lie at 3-166 and 184-358; these read FLVA…LNEY and IHFS…ACAN. Residues 9-16, 56-60, 118-121, 190-197, 237-241, and 302-305 contribute to the GTP site; these read GRANVGKS, DTGGI, NKVD, GRPNVGKS, DTAGV, and NKWD. A KH-like domain is found at 359 to 443; the sequence is KKITTADATR…PIVFEFKQSE (85 aa). The disordered stretch occupies residues 446-465; sequence FADRKNKRSKDEGSKSKKVK.

This sequence belongs to the TRAFAC class TrmE-Era-EngA-EngB-Septin-like GTPase superfamily. EngA (Der) GTPase family. In terms of assembly, associates with the 50S ribosomal subunit.

In terms of biological role, GTPase that plays an essential role in the late steps of ribosome biogenesis. The polypeptide is GTPase Der (Francisella tularensis subsp. tularensis (strain WY96-3418)).